The primary structure comprises 557 residues: Potassium-transporting ATPase potassium-binding subunit (557 aa).

12 helical membrane-spanning segments follow: residues 5–25 (GFLL…PLGS), 63–83 (LCAI…MLLG), 132–152 (GLTV…FALI), 170–190 (LLRI…LFFI), 253–273 (FVQM…FGEV), 283–303 (LLWA…WAEV), 329–349 (VLVS…AVIA), 356–376 (ALGG…FGGV), 379–399 (GLYG…LMIG), 416–436 (LTAL…ALAM), 484–504 (LLAF…MAIA), and 526–546 (LFVG…FIPA).

It belongs to the KdpA family. The system is composed of three essential subunits: KdpA, KdpB and KdpC.

It localises to the cell inner membrane. Part of the high-affinity ATP-driven potassium transport (or Kdp) system, which catalyzes the hydrolysis of ATP coupled with the electrogenic transport of potassium into the cytoplasm. This subunit binds the periplasmic potassium ions and delivers the ions to the membrane domain of KdpB through an intramembrane tunnel. The polypeptide is Potassium-transporting ATPase potassium-binding subunit (Escherichia coli O139:H28 (strain E24377A / ETEC)).